The primary structure comprises 1383 residues: Cell surface hyaluronidase (1383 aa).

The interval 1 to 76 (MYAAGSRGHS…QRTPSESRKR (76 aa)) is disordered. Over 1–82 (MYAAGSRGHS…SRKRKRHKNT (82 aa)) the chain is Cytoplasmic. Phosphoserine is present on residues Ser10, Ser53, and Ser63. Residues 83–103 (FICFAITSFSFFVALAVILGI) traverse the membrane as a helical; Signal-anchor for type II membrane protein segment. The Extracellular portion of the chain corresponds to 104–1383 (SSKYAPDENC…DLLQQALKVL (1280 aa)). Positions 121–245 (RNWDPGQDSA…QRTSWTMLAR (125 aa)) constitute a G8 domain. Residues 255 to 412 (GSYAFEKDFS…ISLSGFRVDI (158 aa)) enclose the GG-type lectin 1 domain. Residue Asn292 is glycosylated (N-linked (GlcNAc...) asparagine). PbH1 repeat units follow at residues 669 to 691 (HPNN…WYLF), 711 to 733 (TPLG…FVDK), and 791 to 812 (GGDI…TFAS). N-linked (GlcNAc...) asparagine glycans are attached at residues Asn914 and Asn1234. The GG-type lectin 2 domain occupies 1208–1366 (KSYLPVRFQS…MEEYGCSRTG (159 aa)).

Belongs to the CEMIP family. Requires Ca(2+) as cofactor. As to expression, widely expressed. Strongly expressed in endothelial cells in the subcapsular sinus of lymph nodes and in the liver sinusoid, two primary sites implicated in systemic hyaluronan turnover.

Its subcellular location is the cell membrane. It carries out the reaction Random hydrolysis of (1-&gt;4)-linkages between N-acetyl-beta-D-glucosamine and D-glucuronate residues in hyaluronate.. Functionally, cell surface hyaluronidase that mediates the initial cleavage of extracellular high-molecular-weight hyaluronan into intermediate-size hyaluronan of approximately 5 kDa fragments. Very specific to hyaluronan; not able to cleave chondroitin sulfate or dermatan sulfate. Has an essential function in systemic hyaluronan catabolism and turnover and regulates cell adhesion and migration via hyaluronan degradation at focal adhesion sites. Acts as a regulator of angiogenesis and heart morphogenesis by mediating degradation of extracellular hyaluronan, thereby regulating VEGF signaling. In Mus musculus (Mouse), this protein is Cell surface hyaluronidase.